A 188-amino-acid chain; its full sequence is Probable RNA 2'-phosphotransferase (188 aa).

This sequence belongs to the KptA/TPT1 family.

Removes the 2'-phosphate from RNA via an intermediate in which the phosphate is ADP-ribosylated by NAD followed by a presumed transesterification to release the RNA and generate ADP-ribose 1''-2''-cyclic phosphate (APPR&gt;P). May function as an ADP-ribosylase. This is Probable RNA 2'-phosphotransferase from Pseudomonas savastanoi pv. phaseolicola (strain 1448A / Race 6) (Pseudomonas syringae pv. phaseolicola (strain 1448A / Race 6)).